Reading from the N-terminus, the 172-residue chain is Large ribosomal subunit protein uL16 (172 aa).

The protein belongs to the universal ribosomal protein uL16 family.

The chain is Large ribosomal subunit protein uL16 from Methanocella arvoryzae (strain DSM 22066 / NBRC 105507 / MRE50).